The primary structure comprises 247 residues: Bidirectional sugar transporter SWEET1 (247 aa).

The Extracellular segment spans residues 1 to 6; it reads MNIAHT. A helical transmembrane segment spans residues 7–27; the sequence is IFGVFGNATALFLFLAPSITF. Residues 7–94 enclose the MtN3/slv 1 domain; sequence IFGVFGNATA…LIFLFYAPKK (88 aa). Residues 28-41 are Cytoplasmic-facing; that stretch reads KRIIKNKSTEQFSG. A helical transmembrane segment spans residues 42 to 62; the sequence is IPYPMTLLNCLLSAWYGLPFV. The Extracellular segment spans residues 63 to 71; sequence SKDNTLVST. The helical transmembrane segment at 72–92 threads the bilayer; it reads INGTGAVIETVYVLIFLFYAP. The Cytoplasmic segment spans residues 93–98; the sequence is KKEKIK. A helical transmembrane segment spans residues 99 to 119; sequence IFGIFSCVLAVFATVALVSLF. At 120–127 the chain is on the extracellular side; it reads ALQGNGRK. Residues 128 to 148 traverse the membrane as a helical segment; the sequence is LFCGLAATVFSIIMYASPLSI. Residues 130–213 form the MtN3/slv 2 domain; that stretch reads CGLAATVFSI…ILYFIYCGNK (84 aa). The Cytoplasmic segment spans residues 149–162; that stretch reads MRLVVKTKSVEFMP. The chain crosses the membrane as a helical span at residues 163-183; it reads FFLSLFVFLCGTSWFVYGLIG. Topologically, residues 184–187 are extracellular; that stretch reads RDPF. The helical transmembrane segment at 188 to 208 threads the bilayer; that stretch reads VAIPNGFGCALGTLQLILYFI. The Cytoplasmic segment spans residues 209–247; sequence YCGNKGEKSADAQKDEKSVEMKDDEKKQNVVNGKQDLQV. A compositionally biased stretch (basic and acidic residues) spans 221–236; the sequence is QKDEKSVEMKDDEKKQ. The interval 221–247 is disordered; that stretch reads QKDEKSVEMKDDEKKQNVVNGKQDLQV. Residues 237-247 are compositionally biased toward polar residues; the sequence is NVVNGKQDLQV.

Belongs to the SWEET sugar transporter family. Forms homooligomers and heterooligomers with SWEET9, SWEET11, SWEET13, SWEET15, SWEET16 and SWEET17. As to expression, mainly expressed in flowers.

It localises to the cell membrane. Its subcellular location is the endoplasmic reticulum membrane. In terms of biological role, mediates both low-affinity uptake and efflux of sugar across the plasma membrane. Can transport glucose, and, to a lower extent, mannose, fructose and galactose. The polypeptide is Bidirectional sugar transporter SWEET1 (Arabidopsis thaliana (Mouse-ear cress)).